The chain runs to 468 residues: Alpha-2A adrenergic receptor (468 aa).

The Extracellular portion of the chain corresponds to methionine 1–threonine 48. N-linked (GlcNAc...) asparagine glycosylation is found at asparagine 25 and asparagine 29. The chain crosses the membrane as a helical span at residues leucine 49–phenylalanine 74. Residues threonine 75 to leucine 85 lie on the Cytoplasmic side of the membrane. Residues phenylalanine 86–methionine 111 form a helical membrane-spanning segment. Over glycine 112–cysteine 121 the chain is Extracellular. A disulfide bond links cysteine 121 and cysteine 203. The chain crosses the membrane as a helical span at residues glutamate 122–leucine 144. Over aspartate 145–arginine 164 the chain is Cytoplasmic. A helical membrane pass occupies residues isoleucine 165–glutamate 188. At lysine 189–aspartate 207 the chain is on the extracellular side. The helical transmembrane segment at glutamine 208–valine 232 threads the bilayer. Over arginine 233–phenylalanine 392 the chain is Cytoplasmic. Disordered stretches follow at residues threonine 242 to valine 279 and asparagine 291 to arginine 381. Positions serine 315–proline 332 are enriched in basic and acidic residues. Serine 348 is subject to Phosphoserine. Residues arginine 351–proline 366 are compositionally biased toward low complexity. Arginine 370 is modified (omega-N-methylarginine). A helical transmembrane segment spans residues valine 393–isoleucine 417. Over glycine 418–lysine 427 the chain is Extracellular. Residues phenylalanine 428 to asparagine 448 traverse the membrane as a helical segment. Residues histidine 449–valine 468 are Cytoplasmic-facing. Cysteine 460 carries S-palmitoyl cysteine lipidation.

Belongs to the G-protein coupled receptor 1 family. Adrenergic receptor subfamily. ADRA2A sub-subfamily. As to quaternary structure, component of the ADA2A-containing complex (ATAC), composed of KAT14, KAT2A, TADA2L, TADA3L, ZZ3, MBIP, WDR5, YEATS2, CCDC101 and DR1. As to expression, retina, brain and olfactory lobe.

The protein resides in the cell membrane. Its function is as follows. Alpha-2 adrenergic receptors mediate the catecholamine-induced inhibition of adenylate cyclase through the action of G proteins. Component of the ATAC complex, a complex with histone acetyltransferase activity on histones H3 and H4. The polypeptide is Alpha-2A adrenergic receptor (Bos taurus (Bovine)).